The primary structure comprises 224 residues: Putative tyrosine-protein phosphatase OCA6 (224 aa).

Position 2 is a phosphothreonine (threonine 2). Positions 8–170 constitute a Tyrosine-protein phosphatase domain; it reads QFSTVQPNLY…FNSEIEVDDL (163 aa). Residue cysteine 114 is the Phosphocysteine intermediate of the active site.

Belongs to the protein-tyrosine phosphatase family.

The protein localises to the cytoplasm. The enzyme catalyses O-phospho-L-tyrosyl-[protein] + H2O = L-tyrosyl-[protein] + phosphate. Its function is as follows. Required for replication of Brome mosaic virus (BMV). This chain is Putative tyrosine-protein phosphatase OCA6 (OCA6), found in Saccharomyces cerevisiae (strain ATCC 204508 / S288c) (Baker's yeast).